A 152-amino-acid chain; its full sequence is Large ribosomal subunit protein bL9 (152 aa).

This sequence belongs to the bacterial ribosomal protein bL9 family.

In terms of biological role, binds to the 23S rRNA. This is Large ribosomal subunit protein bL9 from Rippkaea orientalis (strain PCC 8801 / RF-1) (Cyanothece sp. (strain PCC 8801)).